A 499-amino-acid chain; its full sequence is Eukaryotic peptide chain release factor GTP-binding subunit ERF3A (499 aa).

The disordered stretch occupies residues 1-69; the sequence is MELSEPIVEN…PKSVVAPPGA (69 aa). The segment covering 41-50 has biased composition (basic and acidic residues); that stretch reads RPPEESAHEM. Positions 72-298 constitute a tr-type G domain; it reads KEHVNVVFIG…DNLPNFNRSV (227 aa). Residues 81 to 88 are G1; that stretch reads GHVDAGKS. A GTP-binding site is contributed by 84 to 89; sequence DAGKST. The segment at 137-141 is G2; sequence GKTVE. The G3 stretch occupies residues 158–161; sequence DAPG. GTP contacts are provided by residues 220–223 and 262–264; these read NKMD and SGL. The tract at residues 220 to 223 is G4; that stretch reads NKMD. Residues 262-264 form a G5 region; sequence SGL.

The protein belongs to the TRAFAC class translation factor GTPase superfamily. Classic translation factor GTPase family. ERF3 subfamily. In terms of assembly, component of the eRF1-eRF3-GTP ternary complex, composed of ETF1/ERF1 and ERF3 (GSPT1/ERF3A or GSPT2/ERF3B) and GTP. Component of the transient SURF (SMG1-UPF1-eRF1-eRF3) complex. The ETF1-GSPT1 complex interacts with JMJD4. Interacts with PABPC1. Interacts with SHFL.

It catalyses the reaction GTP + H2O = GDP + phosphate + H(+). Its function is as follows. GTPase component of the eRF1-eRF3-GTP ternary complex, a ternary complex that mediates translation termination in response to the termination codons UAA, UAG and UGA. GSPT1/ERF3A mediates ETF1/ERF1 delivery to stop codons: The eRF1-eRF3-GTP complex binds to a stop codon in the ribosomal A-site. GTP hydrolysis by GSPT1/ERF3A induces a conformational change that leads to its dissociation, permitting ETF1/ERF1 to accommodate fully in the A-site. Component of the transient SURF complex which recruits UPF1 to stalled ribosomes in the context of nonsense-mediated decay (NMD) of mRNAs containing premature stop codons. Required for SHFL-mediated translation termination which inhibits programmed ribosomal frameshifting (-1PRF) of mRNA from viruses and cellular genes. The sequence is that of Eukaryotic peptide chain release factor GTP-binding subunit ERF3A (GSPT1) from Homo sapiens (Human).